Reading from the N-terminus, the 77-residue chain is Protein RALF-like 17 (77 aa).

Residues 1-29 (MAASREFIICCFLTLLLCNFFMRVESGAA) form the signal peptide. C37 and C51 are disulfide-bonded.

Belongs to the plant rapid alkalinization factor (RALF) family.

It localises to the secreted. Its function is as follows. Cell signaling peptide that may regulate plant stress, growth, and development. Mediates a rapid alkalinization of extracellular space by mediating a transient increase in the cytoplasmic Ca(2+) concentration leading to a calcium-dependent signaling events through a cell surface receptor and a concomitant activation of some intracellular mitogen-activated protein kinases. This Arabidopsis thaliana (Mouse-ear cress) protein is Protein RALF-like 17 (RALFL17).